The following is a 373-amino-acid chain: P2Y purinoceptor 1 (373 aa).

Topologically, residues 1–51 are extracellular; that stretch reads MTEVLWPAVPNGTDTAFLADPGSPWGNSTVTSTAAVASPFKCALTKTGFQF. Residues Asn-11 and Asn-27 are each glycosylated (N-linked (GlcNAc...) asparagine). Disulfide bonds link Cys-42–Cys-296 and Cys-124–Cys-202. Residue Lys-46 participates in ADP binding. Residues 52–74 traverse the membrane as a helical segment; sequence YYLPAVYILVFIIGFLGNSVAIW. Over 75–87 the chain is Cytoplasmic; it reads MFVFHMKPWSGIS. A helical membrane pass occupies residues 88–109; it reads VYMFNLALADFLYVLTLPALIF. Residues 110-125 are Extracellular-facing; the sequence is YYFNKTDWIFGDAMCK. Residue Asn-113 is glycosylated (N-linked (GlcNAc...) asparagine). A helical membrane pass occupies residues 126–147; it reads LQRFIFHVNLYGSILFLTCISA. Over 148–166 the chain is Cytoplasmic; sequence HRYSGVVYPLKSLGRLKKK. The helical transmembrane segment at 167–188 threads the bilayer; that stretch reads NAVYISVLVWLIVVVGISPILF. The Extracellular segment spans residues 189–214; that stretch reads YSGTGIRKNKTITCYDTTSDEYLRSY. A glycan (N-linked (GlcNAc...) asparagine) is linked at Asn-197. 203-205 provides a ligand contact to ADP; that stretch reads YDT. Residues 215–237 form a helical membrane-spanning segment; sequence FIYSMCTTVAMFCVPLVLILGCY. Residues 238–260 lie on the Cytoplasmic side of the membrane; sequence GLIVRALIYKDLDNSPLRRKSIY. Residues 261-284 traverse the membrane as a helical segment; sequence LVIIVLTVFAVSYIPFHVMKTMNL. ADP contacts are provided by residues 283-287, 303-306, and Arg-310; these read NLRAR and YATY. The Extracellular segment spans residues 285-303; that stretch reads RARLDFQTPEMCAFNDRVY. The helical transmembrane segment at 304 to 325 threads the bilayer; it reads ATYQVTRGLASLNSCVDPILYF. Topologically, residues 326-373 are cytoplasmic; the sequence is LAGDTFRRRLSRATRKASRRSEANLQSKSEDMTLNILSEFKQNGDTSL.

This sequence belongs to the G-protein coupled receptor 1 family.

The protein resides in the cell membrane. Receptor for extracellular adenine nucleotides such as ADP. In platelets, binding to ADP leads to mobilization of intracellular calcium ions via activation of phospholipase C, a change in platelet shape, and ultimately platelet aggregation. The polypeptide is P2Y purinoceptor 1 (P2RY1) (Bos taurus (Bovine)).